A 162-amino-acid polypeptide reads, in one-letter code: Peroxiredoxin-2C (162 aa).

Positions 4–162 (VAVGDTLPDG…SGAEEILKAL (159 aa)) constitute a Thioredoxin domain. Cysteine 51 functions as the Cysteine sulfenic acid (-SOH) intermediate in the catalytic mechanism.

It belongs to the peroxiredoxin family. Prx5 subfamily. In terms of assembly, monomer.

The protein resides in the cytoplasm. The enzyme catalyses [glutaredoxin]-dithiol + a hydroperoxide = [glutaredoxin]-disulfide + an alcohol + H2O. Reduces hydrogen peroxide and alkyl hydroperoxides with reducing equivalents provided through the thioredoxin or glutaredoxin system. May be involved in intracellular redox signaling. Functionally, thiol-specific peroxidase that catalyzes the reduction of hydrogen peroxide and organic hydroperoxides to water and alcohols, respectively. Plays a role in cell protection against oxidative stress by detoxifying peroxides. The chain is Peroxiredoxin-2C (PRXIIC) from Oryza sativa subsp. japonica (Rice).